The chain runs to 156 residues: Ribosomal RNA large subunit methyltransferase H (156 aa).

S-adenosyl-L-methionine contacts are provided by residues leucine 73, glycine 104, and 123-128 (LGALTL).

The protein belongs to the RNA methyltransferase RlmH family. As to quaternary structure, homodimer.

The protein localises to the cytoplasm. The enzyme catalyses pseudouridine(1915) in 23S rRNA + S-adenosyl-L-methionine = N(3)-methylpseudouridine(1915) in 23S rRNA + S-adenosyl-L-homocysteine + H(+). Specifically methylates the pseudouridine at position 1915 (m3Psi1915) in 23S rRNA. The sequence is that of Ribosomal RNA large subunit methyltransferase H from Dichelobacter nodosus (strain VCS1703A).